A 166-amino-acid polypeptide reads, in one-letter code: Prorelaxin H1 (166 aa).

The N-terminal stretch at Ser-1–Ala-5 is a signal peptide. Disulfide bonds link Cys-16–Cys-153, Cys-28–Cys-166, and Cys-152–Cys-157. Positions Ser-37–Gln-139 are cleaved as a propeptide — connecting peptide.

The protein belongs to the insulin family. In terms of assembly, heterodimer of a B chain and an A chain linked by two disulfide bonds. In terms of tissue distribution, expressed in the corpus luteum of pregnancy but not in the placenta.

It localises to the secreted. Its function is as follows. Relaxin is an ovarian hormone that acts with estrogen to produce dilatation of the birth canal in many mammals. May be involved in remodeling of connective tissues during pregnancy, promoting growth of pubic ligaments and ripening of the cervix. In Pan troglodytes (Chimpanzee), this protein is Prorelaxin H1 (RNL1).